A 224-amino-acid polypeptide reads, in one-letter code: DNA mismatch repair protein MutH (224 aa).

It belongs to the MutH family.

The protein localises to the cytoplasm. Functionally, sequence-specific endonuclease that cleaves unmethylated GATC sequences. It is involved in DNA mismatch repair. The chain is DNA mismatch repair protein MutH from Histophilus somni (strain 2336) (Haemophilus somnus).